A 381-amino-acid chain; its full sequence is Hps1-dma1 cluster transcription factor tfc7 (381 aa).

Positions 10–37 (CDHCSATKIKCTQERPQCTRCRALGRDC) form a DNA-binding region, zn(2)-C6 fungal-type. Residues 41-88 (RSLRAGKPPRSSQGLNRKISNAPVLPRQNTPVSNPTSMSSKPEHWPTM) are disordered. Polar residues-rich tracts occupy residues 50 to 59 (RSSQGLNRKI) and 67 to 80 (RQNT…SMSS).

Its subcellular location is the nucleus. Transcription factor that regulates the expression of the hps1-dma1 gene cluster that probably mediates the biosynthesis a derivative of cyclopiazonic acid (CPA). Further studies are required to whether the CPA-like hps1-dma1 cluster is functional or a non-functional relic reflecting evolution of D.septosporum. The chain is Hps1-dma1 cluster transcription factor tfc7 (tfc7) from Dothistroma septosporum (strain NZE10 / CBS 128990) (Red band needle blight fungus).